Consider the following 467-residue polypeptide: ATP synthase subunit beta (467 aa).

157-164 lines the ATP pocket; that stretch reads GGAGVGKT.

This sequence belongs to the ATPase alpha/beta chains family. F-type ATPases have 2 components, CF(1) - the catalytic core - and CF(0) - the membrane proton channel. CF(1) has five subunits: alpha(3), beta(3), gamma(1), delta(1), epsilon(1). CF(0) has three main subunits: a(1), b(2) and c(9-12). The alpha and beta chains form an alternating ring which encloses part of the gamma chain. CF(1) is attached to CF(0) by a central stalk formed by the gamma and epsilon chains, while a peripheral stalk is formed by the delta and b chains.

Its subcellular location is the cell inner membrane. It catalyses the reaction ATP + H2O + 4 H(+)(in) = ADP + phosphate + 5 H(+)(out). Its function is as follows. Produces ATP from ADP in the presence of a proton gradient across the membrane. The catalytic sites are hosted primarily by the beta subunits. The chain is ATP synthase subunit beta from Desulfosudis oleivorans (strain DSM 6200 / JCM 39069 / Hxd3) (Desulfococcus oleovorans).